Reading from the N-terminus, the 250-residue chain is MGLSRLGIETAYIGKVGSDEEGRILLADFEREGVSTDFVIRAEGRSGTAMIFVDEKGNRAILVDPGVNDTIAYDEIDVDSARKYDLIHLTSFICKNGLDSLNSQKRIVEEFDSVSFDPGMPYAERGLGDMEKILKNTTIFLPNRQEIEMLFSEDYRTAAERCIEMGIEIVAVKLGSEGCWIKKGDREVTVKPVSTKVVDTTGAGDAFNAGFLYGYLKGKDIEECGRLGNFVAAKCIEKYGAREGLPRSVD.

The protein belongs to the carbohydrate kinase PfkB family.

This is an uncharacterized protein from Archaeoglobus fulgidus (strain ATCC 49558 / DSM 4304 / JCM 9628 / NBRC 100126 / VC-16).